A 395-amino-acid chain; its full sequence is S-adenosylmethionine synthase (395 aa).

An ATP-binding site is contributed by H18. Mg(2+) is bound at residue D20. E46 provides a ligand contact to K(+). 2 residues coordinate L-methionine: E59 and Q103. A flexible loop region spans residues 103–113 (QSADIAVGVDS). ATP is bound by residues 170 to 172 (DAK), 235 to 236 (KF), D244, 250 to 251 (RK), A267, and K271. An L-methionine-binding site is contributed by D244. K275 contacts L-methionine.

This sequence belongs to the AdoMet synthase family. In terms of assembly, homotetramer; dimer of dimers. Mg(2+) serves as cofactor. Requires K(+) as cofactor.

The protein resides in the cytoplasm. It catalyses the reaction L-methionine + ATP + H2O = S-adenosyl-L-methionine + phosphate + diphosphate. The protein operates within amino-acid biosynthesis; S-adenosyl-L-methionine biosynthesis; S-adenosyl-L-methionine from L-methionine: step 1/1. Functionally, catalyzes the formation of S-adenosylmethionine (AdoMet) from methionine and ATP. The overall synthetic reaction is composed of two sequential steps, AdoMet formation and the subsequent tripolyphosphate hydrolysis which occurs prior to release of AdoMet from the enzyme. The chain is S-adenosylmethionine synthase from Granulibacter bethesdensis (strain ATCC BAA-1260 / CGDNIH1).